The chain runs to 203 residues: Molybdenum cofactor guanylyltransferase (203 aa).

Residues Leu-12–Gly-14, Lys-25, Asn-53, Asp-71, and Asp-101 each bind GTP. Asp-101 contacts Mg(2+).

The protein belongs to the MobA family. As to quaternary structure, monomer. Requires Mg(2+) as cofactor.

Its subcellular location is the cytoplasm. It catalyses the reaction Mo-molybdopterin + GTP + H(+) = Mo-molybdopterin guanine dinucleotide + diphosphate. In terms of biological role, transfers a GMP moiety from GTP to Mo-molybdopterin (Mo-MPT) cofactor (Moco or molybdenum cofactor) to form Mo-molybdopterin guanine dinucleotide (Mo-MGD) cofactor. This chain is Molybdenum cofactor guanylyltransferase, found in Cupriavidus metallidurans (strain ATCC 43123 / DSM 2839 / NBRC 102507 / CH34) (Ralstonia metallidurans).